The primary structure comprises 290 residues: 33 kDa chaperonin (290 aa).

Intrachain disulfides connect C235/C237 and C268/C271.

This sequence belongs to the HSP33 family. Post-translationally, under oxidizing conditions two disulfide bonds are formed involving the reactive cysteines. Under reducing conditions zinc is bound to the reactive cysteines and the protein is inactive.

It is found in the cytoplasm. Functionally, redox regulated molecular chaperone. Protects both thermally unfolding and oxidatively damaged proteins from irreversible aggregation. Plays an important role in the bacterial defense system toward oxidative stress. The polypeptide is 33 kDa chaperonin (Streptococcus pneumoniae (strain P1031)).